We begin with the raw amino-acid sequence, 309 residues long: MMILKNKRMLKIGICVGILGLSITSLEAFTGGALQVEAKQKTGQVKHKNQATHKEFSQLEKKFDARVGVYAIDTGTNQTISYRSNERFAFASTYKALAAGVLLQQNSIDTLNEVITFTKEDLVDYSPVTEKHVDTGMKLGEIAEAAVRSSDNTAGNILFNKIGGPKGYEKALRKMGDRVTMSDRFETELNEAIPGDIRDTSTAKRIATNLKAFTVGNALPAEKRKILTEWMKGNATGDKLIRAGVPTDWVVGDKSGAGSYGTRNDIAIVWPPNRAPIIIAILSSKDEKEASYDNQLIAEATEVIVKALK.

The signal sequence occupies residues 1–28; that stretch reads MMILKNKRMLKIGICVGILGLSITSLEA. Residue serine 92 is the Acyl-ester intermediate of the active site. Glutamate 188 functions as the Proton acceptor in the catalytic mechanism. 254-256 serves as a coordination point for substrate; that stretch reads KSG.

The protein belongs to the class-A beta-lactamase family.

The enzyme catalyses a beta-lactam + H2O = a substituted beta-amino acid. Its function is as follows. This protein is a beta-lactamase with a substrate specificity for penicillins. The protein is Beta-lactamase (bla) of Bacillus thuringiensis.